A 165-amino-acid chain; its full sequence is Transcriptional repressor NrdR (165 aa).

A zinc finger lies at 3 to 34; sequence CPFCRHPDSRVVDSREADEGQAIRRRRSCPEC. The 91-residue stretch at 46 to 136 folds into the ATP-cone domain; sequence LSVVKRSGVT…VYKSFSSAAD (91 aa).

Belongs to the NrdR family. Zn(2+) serves as cofactor.

Its function is as follows. Negatively regulates transcription of bacterial ribonucleotide reductase nrd genes and operons by binding to NrdR-boxes. In Rhodococcus erythropolis (strain PR4 / NBRC 100887), this protein is Transcriptional repressor NrdR.